The following is a 100-amino-acid chain: uncharacterized protein (100 aa).

Its subcellular location is the cytoplasm. The protein localises to the endoplasmic reticulum. This is an uncharacterized protein from Schizosaccharomyces pombe (strain 972 / ATCC 24843) (Fission yeast).